The primary structure comprises 584 residues: A-type ATP synthase subunit A (584 aa).

233–240 (GPFGSGKT) lines the ATP pocket.

It belongs to the ATPase alpha/beta chains family. In terms of assembly, has multiple subunits with at least A(3), B(3), C, D, E, F, H, I and proteolipid K(x).

It localises to the cell membrane. It carries out the reaction ATP + H2O + 4 H(+)(in) = ADP + phosphate + 5 H(+)(out). Component of the A-type ATP synthase that produces ATP from ADP in the presence of a proton gradient across the membrane. The A chain is the catalytic subunit. This Methanobrevibacter smithii (strain ATCC 35061 / DSM 861 / OCM 144 / PS) protein is A-type ATP synthase subunit A.